The following is a 399-amino-acid chain: Chorismate synthase (399 aa).

Arg-40 and Arg-46 together coordinate NADP(+). Residues 135-137 (RAS), 256-257 (QA), Gly-301, 316-320 (KPIAT), and Arg-342 contribute to the FMN site.

This sequence belongs to the chorismate synthase family. As to quaternary structure, homotetramer. FMNH2 serves as cofactor.

It carries out the reaction 5-O-(1-carboxyvinyl)-3-phosphoshikimate = chorismate + phosphate. The protein operates within metabolic intermediate biosynthesis; chorismate biosynthesis; chorismate from D-erythrose 4-phosphate and phosphoenolpyruvate: step 7/7. Catalyzes the anti-1,4-elimination of the C-3 phosphate and the C-6 proR hydrogen from 5-enolpyruvylshikimate-3-phosphate (EPSP) to yield chorismate, which is the branch point compound that serves as the starting substrate for the three terminal pathways of aromatic amino acid biosynthesis. This reaction introduces a second double bond into the aromatic ring system. The polypeptide is Chorismate synthase (Pseudarthrobacter chlorophenolicus (strain ATCC 700700 / DSM 12829 / CIP 107037 / JCM 12360 / KCTC 9906 / NCIMB 13794 / A6) (Arthrobacter chlorophenolicus)).